Here is a 593-residue protein sequence, read N- to C-terminus: MGEALRGLKRTIMCGEPRENNIGQKVTVMGWVQRKRNLGGLIFVDLRDRTGIMQIVFGEEINKEAFEKSDNVKSEYCIAVTGEIVKRQSPNNDMETGAVELKGEDIKILSESETPPIYIKEGLDASENIRLKYRYLDLRRPDMQKIFMIRHKTCKVVRDFLDENGFLEMETPILTKSTPEGARDYLVPSRNYKGMFYALPQSPQIFKQLLMVSGYDKYFQITKCFRDEDLRANRQPEFTQIDMELSFIEEDDVIELNERLLAKVFKEVAGIDVKLPIERMPYKIAMEKYGSDKPDLRFGMEINDLTEAVKNSEFKVFKGAIEAGGSVRAIKAGNCATMGRKQIDKLQDFVKTYKAKGLAWIAYKEDEIKSPIAKFLTEEEMKAILEKMDAKVGDLILIVADKNNVVFESLGALRLHLAKELDIINKDEFRFVWITEFPLLSYNEEEGRYQAEHHPFTALMDEDVELLDTDPGKVRAKAYDIVLNGEELGGGSIRIHDSKLQEKMFNVLGFTKEKAWERFGFLLEAFKFGPPPHGGLAYGLDRMIMFLAGTENIKDVITFPKNQNAFCPLTEAPNVVDENQLEELGIKKIEKED.

Glutamate 180 provides a ligand contact to L-aspartate. The segment at 204 to 207 (QIFK) is aspartate. Arginine 226 contacts L-aspartate. ATP-binding positions include 226–228 (RDE) and glutamine 235. Residue histidine 453 coordinates L-aspartate. An ATP-binding site is contributed by glutamate 487. An L-aspartate-binding site is contributed by arginine 494. 539–542 (GLDR) contacts ATP.

The protein belongs to the class-II aminoacyl-tRNA synthetase family. Type 1 subfamily. In terms of assembly, homodimer.

It localises to the cytoplasm. The enzyme catalyses tRNA(Asp) + L-aspartate + ATP = L-aspartyl-tRNA(Asp) + AMP + diphosphate. Catalyzes the attachment of L-aspartate to tRNA(Asp) in a two-step reaction: L-aspartate is first activated by ATP to form Asp-AMP and then transferred to the acceptor end of tRNA(Asp). The sequence is that of Aspartate--tRNA ligase from Clostridium botulinum (strain Loch Maree / Type A3).